The sequence spans 493 residues: Probable fatty acyl-CoA reductase 4 (493 aa).

The protein belongs to the fatty acyl-CoA reductase family. Expressed in the endodermal cell layer surrounding the central vasculature in roots. Expressed in the hilum region of seeds. Expressed in stamen filaments and receptacle of siliques.

It carries out the reaction a long-chain fatty acyl-CoA + 2 NADPH + 2 H(+) = a long-chain primary fatty alcohol + 2 NADP(+) + CoA. In terms of biological role, catalyzes the reduction of fatty acyl-CoA to fatty alcohols. Catalyzes specifically the formation of C18:0 and C20:0 fatty alcohols. Provides the fatty alcohols required for synthesis of suberin in roots, seed coat and wound-induced leaf tissue. Provides the fatty alcohols required for synthesis of alkyl hydroxycinnamates in root waxes. The polypeptide is Probable fatty acyl-CoA reductase 4 (Arabidopsis thaliana (Mouse-ear cress)).